Reading from the N-terminus, the 402-residue chain is NADH-quinone oxidoreductase subunit D (402 aa).

Belongs to the complex I 49 kDa subunit family. In terms of assembly, NDH-1 is composed of 14 different subunits. Subunits NuoB, C, D, E, F, and G constitute the peripheral sector of the complex.

The protein localises to the cell inner membrane. The enzyme catalyses a quinone + NADH + 5 H(+)(in) = a quinol + NAD(+) + 4 H(+)(out). Functionally, NDH-1 shuttles electrons from NADH, via FMN and iron-sulfur (Fe-S) centers, to quinones in the respiratory chain. The immediate electron acceptor for the enzyme in this species is believed to be ubiquinone. Couples the redox reaction to proton translocation (for every two electrons transferred, four hydrogen ions are translocated across the cytoplasmic membrane), and thus conserves the redox energy in a proton gradient. This is NADH-quinone oxidoreductase subunit D from Rhodopseudomonas palustris (strain ATCC BAA-98 / CGA009).